A 146-amino-acid chain; its full sequence is Ferredoxin-thioredoxin reductase catalytic chain, chloroplastic (146 aa).

The N-terminal 26 residues, 1–26 (MMSMASTTASPFCPSPMPRGRKCTVR), are a transit peptide targeting the chloroplast. [4Fe-4S] cluster is bound at residue cysteine 85. Cysteine 87 functions as the Nucleophile in the catalytic mechanism. Cysteine 87 and cysteine 117 are joined by a disulfide. Cysteine 104, cysteine 106, and cysteine 115 together coordinate [4Fe-4S] cluster.

The protein belongs to the ferredoxin thioredoxin reductase beta subunit family. As to quaternary structure, heterodimer of subunit A (variable subunit) and subunit B (catalytic subunit). Heterodimeric FTR forms a complex with ferredoxin and thioredoxin. The cofactor is [4Fe-4S] cluster.

The protein resides in the plastid. Its subcellular location is the chloroplast. It catalyses the reaction [thioredoxin]-disulfide + 2 reduced [2Fe-2S]-[ferredoxin] + 2 H(+) = [thioredoxin]-dithiol + 2 oxidized [2Fe-2S]-[ferredoxin]. Its function is as follows. Catalytic subunit of the ferredoxin-thioredoxin reductase (FTR), which catalyzes the two-electron reduction of thioredoxins by the electrons provided by reduced ferredoxin. The protein is Ferredoxin-thioredoxin reductase catalytic chain, chloroplastic of Oryza sativa subsp. japonica (Rice).